Reading from the N-terminus, the 365-residue chain is Chorismate synthase (365 aa).

NADP(+) is bound at residue Arg48. Residues 125–127, 238–239, Gly278, 293–297, and Arg319 contribute to the FMN site; these read RSS, NA, and KPTSS.

This sequence belongs to the chorismate synthase family. In terms of assembly, homotetramer. It depends on FMNH2 as a cofactor.

It carries out the reaction 5-O-(1-carboxyvinyl)-3-phosphoshikimate = chorismate + phosphate. It functions in the pathway metabolic intermediate biosynthesis; chorismate biosynthesis; chorismate from D-erythrose 4-phosphate and phosphoenolpyruvate: step 7/7. Functionally, catalyzes the anti-1,4-elimination of the C-3 phosphate and the C-6 proR hydrogen from 5-enolpyruvylshikimate-3-phosphate (EPSP) to yield chorismate, which is the branch point compound that serves as the starting substrate for the three terminal pathways of aromatic amino acid biosynthesis. This reaction introduces a second double bond into the aromatic ring system. This is Chorismate synthase from Marinomonas sp. (strain MWYL1).